We begin with the raw amino-acid sequence, 328 residues long: Putative tyrosine-protein kinase C03B1.5 (328 aa).

A Protein kinase domain is found at 25–288 (WSPALKIGSG…ALHASSQTYL (264 aa)). ATP-binding positions include 31–39 (IGSGAFGEV) and Lys62. Asp155 functions as the Proton acceptor in the catalytic mechanism.

The protein belongs to the protein kinase superfamily. Tyr protein kinase family.

It carries out the reaction L-tyrosyl-[protein] + ATP = O-phospho-L-tyrosyl-[protein] + ADP + H(+). This Caenorhabditis elegans protein is Putative tyrosine-protein kinase C03B1.5.